Reading from the N-terminus, the 516-residue chain is D-aminopeptidase (516 aa).

S61 functions as the Nucleophile in the catalytic mechanism. Residue K64 is the Proton donor/acceptor of the active site. Positions 476–486 are important for specificity; that stretch reads RRSMDAPAPGD. D480 contributes to the substrate binding site.

The protein belongs to the peptidase S12 family. As to quaternary structure, homodimer.

The catalysed reaction is Release of an N-terminal D-amino acid from a peptide, Xaa-|-Yaa-, in which Xaa is preferably D-Ala, D-Ser or D-Thr. D-amino acid amides and methyl esters also are hydrolyzed, as is glycine amide.. Inhibited by beta-lactam compounds such as 6-aminopenicillic acid, 7-aminocephalosporanic acid, benzylpenicillin and ampicillin. Inhibited by p-chloromercuribenzoate. Functionally, hydrolyzes N-terminal residues in D-amino acid-containing peptides. The sequence is that of D-aminopeptidase from Cereibacter sphaeroides (strain ATCC 17029 / ATH 2.4.9) (Rhodobacter sphaeroides).